The following is a 149-amino-acid chain: Large ribosomal subunit protein uL15 (149 aa).

Composition is skewed to basic residues over residues 1-14 and 21-30; these read MPSR…HRGH and RIGKHRKHPG. A disordered region spans residues 1–39; sequence MPSRFTKTRKHRGHVSAGKGRIGKHRKHPGGRGMAGGQH. 2 consecutive short sequence motifs (nuclear localization signal) follow at residues 7-13 and 24-30; these read KTRKHRG and KHRKHPG. Lysine 96 is covalently cross-linked (Glycyl lysine isopeptide (Lys-Gly) (interchain with G-Cter in ubiquitin)).

This sequence belongs to the universal ribosomal protein uL15 family. Component of the large ribosomal subunit (LSU). Mature yeast ribosomes consist of a small (40S) and a large (60S) subunit. The 40S small subunit contains 1 molecule of ribosomal RNA (18S rRNA) and 33 different proteins (encoded by 57 genes). The large 60S subunit contains 3 rRNA molecules (25S, 5.8S and 5S rRNA) and 46 different proteins (encoded by 81 genes).

It localises to the cytoplasm. Functionally, component of the ribosome, a large ribonucleoprotein complex responsible for the synthesis of proteins in the cell. The small ribosomal subunit (SSU) binds messenger RNAs (mRNAs) and translates the encoded message by selecting cognate aminoacyl-transfer RNA (tRNA) molecules. The large subunit (LSU) contains the ribosomal catalytic site termed the peptidyl transferase center (PTC), which catalyzes the formation of peptide bonds, thereby polymerizing the amino acids delivered by tRNAs into a polypeptide chain. The nascent polypeptides leave the ribosome through a tunnel in the LSU and interact with protein factors that function in enzymatic processing, targeting, and the membrane insertion of nascent chains at the exit of the ribosomal tunnel. In Saccharomyces cerevisiae (strain ATCC 204508 / S288c) (Baker's yeast), this protein is Large ribosomal subunit protein uL15.